We begin with the raw amino-acid sequence, 244 residues long: TM2 domain-containing protein 3 (244 aa).

Positions 1–21 (MSSYIMLVLLLLDIYSSCVDG) are cleaved as a signal peptide. Topologically, residues 22 to 176 (YLSSPHVGQD…RVFQKRLFCN (155 aa)) are extracellular. N-linked (GlcNAc...) asparagine glycosylation is found at asparagine 86, asparagine 94, asparagine 115, asparagine 137, asparagine 152, and asparagine 176. Residues 177–197 (WTGGYKWSTALALSITLGGFG) form a helical membrane-spanning segment. The 48-residue stretch at 180 to 227 (GYKWSTALALSITLGGFGADRFYLGQWREGLGKLFSFGGLGIWTLIDV) folds into the TM2 domain. Residues 198–212 (ADRFYLGQWREGLGK) lie on the Cytoplasmic side of the membrane. A helical transmembrane segment spans residues 213–233 (LFSFGGLGIWTLIDVLLIGVG). Topologically, residues 234-244 (YVGPADGSLYI) are extracellular.

It belongs to the TM2 family.

It is found in the membrane. The chain is TM2 domain-containing protein 3 (tm2d3) from Danio rerio (Zebrafish).